The sequence spans 349 residues: Arginine kinase (349 aa).

A Phosphagen kinase N-terminal domain is found at 3 to 85; that stretch reads DLAELWEKVS…LGPVILDYHK (83 aa). 58–62 provides a ligand contact to substrate; the sequence is GVGVY. Residues 113-349 enclose the Phosphagen kinase C-terminal domain; that stretch reads WIVSTRVRVG…EEIIKLEKAA (237 aa). Residues 116–120 and His179 each bind ATP; that span reads STRVR. Substrate is bound at residue Glu219. ATP is bound at residue Arg223. Substrate is bound at residue Cys265. Residues 274–278 and 302–307 contribute to the ATP site; these read RASVH and RGIHGE. Glu307 lines the substrate pocket.

It belongs to the ATP:guanido phosphotransferase family.

The enzyme catalyses L-arginine + ATP = N(omega)-phospho-L-arginine + ADP + H(+). This Liolophura japonica (Chiton) protein is Arginine kinase.